We begin with the raw amino-acid sequence, 147 residues long: Urease accessory protein UreE (147 aa).

The protein belongs to the UreE family.

It is found in the cytoplasm. Involved in urease metallocenter assembly. Binds nickel. Probably functions as a nickel donor during metallocenter assembly. The protein is Urease accessory protein UreE of Marinomonas sp. (strain MWYL1).